The chain runs to 299 residues: Bifunctional protein FolD (299 aa).

NADP(+) contacts are provided by residues 168–170 (GRS), serine 193, and isoleucine 234.

It belongs to the tetrahydrofolate dehydrogenase/cyclohydrolase family. As to quaternary structure, homodimer.

The enzyme catalyses (6R)-5,10-methylene-5,6,7,8-tetrahydrofolate + NADP(+) = (6R)-5,10-methenyltetrahydrofolate + NADPH. It catalyses the reaction (6R)-5,10-methenyltetrahydrofolate + H2O = (6R)-10-formyltetrahydrofolate + H(+). Its pathway is one-carbon metabolism; tetrahydrofolate interconversion. Functionally, catalyzes the oxidation of 5,10-methylenetetrahydrofolate to 5,10-methenyltetrahydrofolate and then the hydrolysis of 5,10-methenyltetrahydrofolate to 10-formyltetrahydrofolate. The sequence is that of Bifunctional protein FolD from Brucella abortus (strain S19).